A 33-amino-acid polypeptide reads, in one-letter code: Photosystem II reaction center protein Psb30 (33 aa).

The chain crosses the membrane as a helical span at residues 5–25 (LIVQLTSLALITLAGPLIVAL).

This sequence belongs to the Psb30/Ycf12 family. In terms of assembly, PSII is composed of 1 copy each of membrane proteins PsbA, PsbB, PsbC, PsbD, PsbE, PsbF, PsbH, PsbI, PsbJ, PsbK, PsbL, PsbM, PsbT, PsbY, PsbZ, Psb30/Ycf12, peripheral proteins of the oxygen-evolving complex and a large number of cofactors. It forms dimeric complexes.

It is found in the plastid. Its subcellular location is the chloroplast thylakoid membrane. Functionally, a core subunit of photosystem II (PSII), probably helps stabilize the reaction center. The protein is Photosystem II reaction center protein Psb30 of Euglena sanguinea.